The sequence spans 1252 residues: Immunoglobulin superfamily DCC subclass member 4 (1252 aa).

A signal peptide spans 1–22 (MARADTGRGLLVLTFCLLSARG). Residues 23–956 (ELPLPQETTV…SDSLDVHAVT (934 aa)) are Extracellular-facing. Ig-like domains lie at 27 to 136 (PQET…VAVV), 142 to 228 (EDFS…ASLT), 241 to 329 (QDVV…AELR), and 334 to 420 (PAIS…APLA). 2 disulfides stabilise this stretch: Cys-55-Cys-120 and Cys-163-Cys-211. The N-linked (GlcNAc...) asparagine glycan is linked to Asn-88. N-linked (GlcNAc...) asparagine glycosylation is present at Asn-251. Intrachain disulfides connect Cys-264–Cys-311 and Cys-355–Cys-404. Fibronectin type-III domains follow at residues 430–524 (APTR…TLDD), 526–622 (PSAA…TPGV), 631–742 (APAE…TPDL), 751–844 (PPAH…TLPD), and 849–944 (PPSD…TLQK). The tract at residues 669-688 (TEEEADGDRPPGGRGDQAWD) is disordered. A helical membrane pass occupies residues 957–977 (GIIVGVCLGLLCLLACMCAGL). The Cytoplasmic portion of the chain corresponds to 978–1252 (RRSSHREALP…RAPVSSAQVP (275 aa)). Thr-994 carries the phosphothreonine modification.

This sequence belongs to the immunoglobulin superfamily. DCC family. Expressed in skeletal muscle, heart and brain. Brain expression is hippocampus-specific.

It localises to the cell membrane. In Mus musculus (Mouse), this protein is Immunoglobulin superfamily DCC subclass member 4 (Igdcc4).